Here is a 698-residue protein sequence, read N- to C-terminus: Elongation factor G 2 (698 aa).

Residues E8 to V290 form the tr-type G domain. Residues A17 to T24, D88 to H92, and N142 to D145 contribute to the GTP site.

It belongs to the TRAFAC class translation factor GTPase superfamily. Classic translation factor GTPase family. EF-G/EF-2 subfamily.

The protein resides in the cytoplasm. In terms of biological role, catalyzes the GTP-dependent ribosomal translocation step during translation elongation. During this step, the ribosome changes from the pre-translocational (PRE) to the post-translocational (POST) state as the newly formed A-site-bound peptidyl-tRNA and P-site-bound deacylated tRNA move to the P and E sites, respectively. Catalyzes the coordinated movement of the two tRNA molecules, the mRNA and conformational changes in the ribosome. This is Elongation factor G 2 from Methylococcus capsulatus (strain ATCC 33009 / NCIMB 11132 / Bath).